The primary structure comprises 128 residues: Cionin (128 aa).

The N-terminal stretch at 1–22 (MGSNIVIYFSIIVIVTLNVNGV) is a signal peptide. Residues 23–108 (PASDLFKSVS…NQGHMQRMDR (86 aa)) constitute a propeptide that is removed on maturation. A sulfotyrosine mark is found at tyrosine 110 and tyrosine 111. Phenylalanine 116 is subject to Phenylalanine amide. The propeptide occupies 120-128 (AIEDVDYEY).

It belongs to the gastrin/cholecystokinin family. In terms of tissue distribution, expressed in both the gut and the neural ganglion.

It localises to the secreted. This is Cionin from Ciona intestinalis (Transparent sea squirt).